The following is a 427-amino-acid chain: Glucose-1-phosphate adenylyltransferase (427 aa).

Alpha-D-glucose 1-phosphate is bound by residues Tyr-112, Gly-177, 192-193 (EK), and Ser-210.

Belongs to the bacterial/plant glucose-1-phosphate adenylyltransferase family. In terms of assembly, homotetramer.

The enzyme catalyses alpha-D-glucose 1-phosphate + ATP + H(+) = ADP-alpha-D-glucose + diphosphate. It participates in glycan biosynthesis; glycogen biosynthesis. Its function is as follows. Involved in the biosynthesis of ADP-glucose, a building block required for the elongation reactions to produce glycogen. Catalyzes the reaction between ATP and alpha-D-glucose 1-phosphate (G1P) to produce pyrophosphate and ADP-Glc. The chain is Glucose-1-phosphate adenylyltransferase from Methylobacillus flagellatus (strain ATCC 51484 / DSM 6875 / VKM B-1610 / KT).